The primary structure comprises 532 residues: Bone morphogenetic protein receptor type-1A (532 aa).

The signal sequence occupies residues 1 to 23 (MTQLYTYIRLLGACLFIISHVQG). The Extracellular segment spans residues 24-152 (QNLDSMLHGT…IGPFFDGSVR (129 aa)). 3 disulfides stabilise this stretch: Cys61/Cys82, Cys63/Cys67, and Cys76/Cys100. N-linked (GlcNAc...) asparagine glycosylation occurs at Asn73. The tract at residues 107–109 (DFQ) is mediates specificity for BMP ligand. 2 disulfides stabilise this stretch: Cys110–Cys124 and Cys125–Cys130. Residues 153–176 (WLAVLISMAVCIVAMIVFSSCFCY) traverse the membrane as a helical segment. The Cytoplasmic segment spans residues 177-532 (KHYCKSISSR…KMVESQDVKI (356 aa)). One can recognise a GS domain in the interval 204-233 (ESLKDLIDQSQSSGSGSGLPLLVQRTIAKQ). The Protein kinase domain occupies 234–525 (IQMVRQVGKG…RIKKTLAKMV (292 aa)). ATP contacts are provided by residues 240–248 (VGKGRYGEV) and Lys261. Asp362 functions as the Proton acceptor in the catalytic mechanism.

The protein belongs to the protein kinase superfamily. TKL Ser/Thr protein kinase family. TGFB receptor subfamily. In terms of assembly, interacts with low affinity with GDF5; positively regulates chondrocyte differentiation. Interacts with BMP4. Interacts with SCUBE3. Interacts with TSC22D1/TSC-22. Interacts with BMP2; the interaction may induce HAMP expression. Interacts with BMP6. Interacts with heterodimers composed of BMP2 and BMP6 in vitro; the interaction may induce HAMP expression. The cofactor is Mg(2+). Mn(2+) serves as cofactor. Glycosylated.

Its subcellular location is the cell membrane. The protein resides in the cell surface. It carries out the reaction L-threonyl-[receptor-protein] + ATP = O-phospho-L-threonyl-[receptor-protein] + ADP + H(+). The enzyme catalyses L-seryl-[receptor-protein] + ATP = O-phospho-L-seryl-[receptor-protein] + ADP + H(+). Its function is as follows. On ligand binding, forms a receptor complex consisting of two type II and two type I transmembrane serine/threonine kinases. Type II receptors phosphorylate and activate type I receptors which autophosphorylate, then bind and activate SMAD transcriptional regulators. Receptor for BMP2, BMP4, GDF5 and GDF6. Positively regulates chondrocyte differentiation through GDF5 interaction. Mediates induction of adipogenesis by GDF6. May promote the expression of HAMP, potentially via its interaction with BMP2. The polypeptide is Bone morphogenetic protein receptor type-1A (Bmpr1a) (Rattus norvegicus (Rat)).